The sequence spans 262 residues: Indole-3-glycerol phosphate synthase (262 aa).

The protein belongs to the TrpC family.

The catalysed reaction is 1-(2-carboxyphenylamino)-1-deoxy-D-ribulose 5-phosphate + H(+) = (1S,2R)-1-C-(indol-3-yl)glycerol 3-phosphate + CO2 + H2O. It participates in amino-acid biosynthesis; L-tryptophan biosynthesis; L-tryptophan from chorismate: step 4/5. The protein is Indole-3-glycerol phosphate synthase of Leuconostoc mesenteroides subsp. mesenteroides (strain ATCC 8293 / DSM 20343 / BCRC 11652 / CCM 1803 / JCM 6124 / NCDO 523 / NBRC 100496 / NCIMB 8023 / NCTC 12954 / NRRL B-1118 / 37Y).